The primary structure comprises 369 residues: F-box protein At3g08750 (369 aa).

An F-box domain is found at Cys-6–Leu-53.

The chain is F-box protein At3g08750 from Arabidopsis thaliana (Mouse-ear cress).